Consider the following 562-residue polypeptide: MDSEEDMLDAHDMESGEDDFYSGGTDDCNDSDDGEPDYGFVEEDADDSAMIASHRSQKNFCVLREEDIRRHQMDNIERVSVVLSITEVEASILLRHFHWSVGRVHDEWFADEERVRKTVGILESHVVPPSDDSELTCGICFDSYPPEKIASVSCGHPFCTTCWTGYISTTINDGPGCLMLRCPDPSCLAAVGHDMVDKLASEDEKEKYNRYFLRSYIEDNRKMKWCPAPGCDFAIDFVAGSGNYDVSCLCSFSFCWNCTEEAHRPVDCSTVSKWILKNSAESENMNWILANSKPCPRCKRPIEKNQGCMHMTCTPPCKYEFCWLCLGAWMDHGERTGGFYACNRYEVAKQEGQYDETERRREMAKNSLERYTHYYERWASNQTSRQKAMADLQQAQMQNLEKLSDKQCTPESQLKFILEAWLQIIECRRVLKWTYAYGYYLPEHEHAKRQFFEYLQGEAESGLERLHQCVEKDLVQFLIAEGPSKDFNDFRTKLAGLTSVTKNYFENLVKALENGLADVDSHAACSSKSTSSKSTGCSSKTRGKGKGSSRTGGSSRNPDDNL.

The disordered stretch occupies residues 1–39 (MDSEEDMLDAHDMESGEDDFYSGGTDDCNDSDDGEPDYG). Positions 27–39 (DCNDSDDGEPDYG) are enriched in acidic residues. The TRIAD supradomain stretch occupies residues 133–346 (SELTCGICFD…GGFYACNRYE (214 aa)). Residues C137, C140, C154, H156, C159, C162, C182, C187, C226, C231, C248, C250, C255, C258, H263, C268, C295, and C298 each contribute to the Zn(2+) site. The segment at 137-187 (CGICFDSYPPEKIASVSCGHPFCTTCWTGYISTTINDGPGCLMLRCPDPSC) adopts an RING-type 1 zinc-finger fold. An IBR-type zinc finger spans residues 206–268 (EKYNRYFLRS…TEEAHRPVDC (63 aa)). The segment at 295–325 (CPRCKRPIEKNQGCMHMTCTPPCKYEFCWLC) adopts an RING-type 2; atypical zinc-finger fold. The active site involves C308. Zn(2+)-binding residues include C313, C317, C322, C325, H332, and C342. Residues 524-562 (ACSSKSTSSKSTGCSSKTRGKGKGSSRTGGSSRNPDDNL) form a disordered region. Residues 525–540 (CSSKSTSSKSTGCSSK) show a composition bias toward low complexity.

Belongs to the RBR family. Ariadne subfamily. It depends on Zn(2+) as a cofactor. Ubiquitous.

It catalyses the reaction [E2 ubiquitin-conjugating enzyme]-S-ubiquitinyl-L-cysteine + [acceptor protein]-L-lysine = [E2 ubiquitin-conjugating enzyme]-L-cysteine + [acceptor protein]-N(6)-ubiquitinyl-L-lysine.. Its pathway is protein modification; protein ubiquitination. Its function is as follows. Might act as an E3 ubiquitin-protein ligase, or as part of E3 complex, which accepts ubiquitin from specific E2 ubiquitin-conjugating enzymes and then transfers it to substrates. The chain is Probable E3 ubiquitin-protein ligase ARI7 (ARI7) from Arabidopsis thaliana (Mouse-ear cress).